The chain runs to 299 residues: Homoserine O-acetyltransferase (299 aa).

Cysteine 142 acts as the Acyl-thioester intermediate in catalysis. Residues lysine 163 and serine 192 each contribute to the substrate site. Histidine 235 serves as the catalytic Proton acceptor. Glutamate 237 is a catalytic residue. Residue arginine 249 participates in substrate binding.

The protein belongs to the MetA family.

Its subcellular location is the cytoplasm. It carries out the reaction L-homoserine + acetyl-CoA = O-acetyl-L-homoserine + CoA. Its pathway is amino-acid biosynthesis; L-methionine biosynthesis via de novo pathway; O-acetyl-L-homoserine from L-homoserine: step 1/1. Transfers an acetyl group from acetyl-CoA to L-homoserine, forming acetyl-L-homoserine. The chain is Homoserine O-acetyltransferase from Synechococcus sp. (strain ATCC 27144 / PCC 6301 / SAUG 1402/1) (Anacystis nidulans).